Here is a 233-residue protein sequence, read N- to C-terminus: Ribosome-recycling factor, mitochondrial (233 aa).

Belongs to the RRF family.

Its subcellular location is the mitochondrion. Necessary for protein synthesis in mitochondria. Functions as a ribosome recycling factor in mitochondria. The chain is Ribosome-recycling factor, mitochondrial (RRF1) from Candida glabrata (strain ATCC 2001 / BCRC 20586 / JCM 3761 / NBRC 0622 / NRRL Y-65 / CBS 138) (Yeast).